The sequence spans 636 residues: Biosynthetic arginine decarboxylase (636 aa).

N6-(pyridoxal phosphate)lysine is present on lysine 101. 286 to 296 (FDVGGGLAVDY) contributes to the substrate binding site.

Belongs to the Orn/Lys/Arg decarboxylase class-II family. SpeA subfamily. The cofactor is Mg(2+). It depends on pyridoxal 5'-phosphate as a cofactor.

It carries out the reaction L-arginine + H(+) = agmatine + CO2. It participates in amine and polyamine biosynthesis; agmatine biosynthesis; agmatine from L-arginine: step 1/1. Catalyzes the biosynthesis of agmatine from arginine. The sequence is that of Biosynthetic arginine decarboxylase from Shewanella frigidimarina (strain NCIMB 400).